The chain runs to 131 residues: D-ribose pyranase (131 aa).

Residue His-20 is the Proton donor of the active site. Residues Asp-28, His-98, and 120-122 each bind substrate; that span reads YAN.

The protein belongs to the RbsD / FucU family. RbsD subfamily. In terms of assembly, homodecamer.

Its subcellular location is the cytoplasm. The enzyme catalyses beta-D-ribopyranose = beta-D-ribofuranose. Its pathway is carbohydrate metabolism; D-ribose degradation; D-ribose 5-phosphate from beta-D-ribopyranose: step 1/2. Its function is as follows. Catalyzes the interconversion of beta-pyran and beta-furan forms of D-ribose. The chain is D-ribose pyranase from Laribacter hongkongensis (strain HLHK9).